Consider the following 654-residue polypeptide: Acetyl-coenzyme A synthetase (654 aa).

CoA contacts are provided by residues 190–193 (RGGK) and Thr313. ATP contacts are provided by residues 389 to 391 (GEP), 413 to 418 (DTWWQT), Asp504, and Arg519. CoA is bound at residue Ser527. Arg530 provides a ligand contact to ATP. Residues Val541 and Val546 each coordinate Mg(2+). The residue at position 613 (Lys613) is an N6-acetyllysine.

Belongs to the ATP-dependent AMP-binding enzyme family. Mg(2+) serves as cofactor. In terms of processing, acetylated. Deacetylation by the SIR2-homolog deacetylase activates the enzyme.

The catalysed reaction is acetate + ATP + CoA = acetyl-CoA + AMP + diphosphate. Its function is as follows. Catalyzes the conversion of acetate into acetyl-CoA (AcCoA), an essential intermediate at the junction of anabolic and catabolic pathways. AcsA undergoes a two-step reaction. In the first half reaction, AcsA combines acetate with ATP to form acetyl-adenylate (AcAMP) intermediate. In the second half reaction, it can then transfer the acetyl group from AcAMP to the sulfhydryl group of CoA, forming the product AcCoA. This Leptospira borgpetersenii serovar Hardjo-bovis (strain L550) protein is Acetyl-coenzyme A synthetase.